A 721-amino-acid chain; its full sequence is Xylosyl- and glucuronyltransferase LARGE2 (721 aa).

Over 1 to 8 (MLPRGRPR) the chain is Cytoplasmic. The chain crosses the membrane as a helical; Signal-anchor for type II membrane protein span at residues 9-29 (ALGAAALLLLLLLLGFLLFGG). Topologically, residues 30–721 (DLGCERREPG…LQQPQSPARG (692 aa)) are lumenal. The interval 59-89 (DGRLRRAAALDGDPGAGPGDHNRSDCGPQPP) is disordered. N80 and N107 each carry an N-linked (GlcNAc...) asparagine glycan. The xylosyltransferase activity stretch occupies residues 97 to 372 (LHVAIVCAGH…FLEYDGNLLR (276 aa)). Positions 201 and 203 each coordinate Mn(2+). An N-linked (GlcNAc...) asparagine glycan is attached at N231. The segment at 373-715 (RELFVCPSQP…LKYLPALQQP (343 aa)) is glucuronyltransferase activity. Positions 521 and 523 each coordinate Mn(2+).

In the C-terminal section; belongs to the glycosyltransferase 49 family. This sequence in the N-terminal section; belongs to the glycosyltransferase 8 family. As to quaternary structure, interacts with B4GAT1. Mn(2+) serves as cofactor. In terms of tissue distribution, widely expressed. Expressed at high level in placenta, pancreas and kidney compared to LARGE. Not expressed in brain.

It localises to the golgi apparatus membrane. The catalysed reaction is 3-O-[beta-D-GlcA-(1-&gt;3)-beta-D-Xyl-(1-&gt;4)-Rib-ol-P-Rib-ol-P-3-beta-D-GalNAc-(1-&gt;3)-beta-D-GlcNAc-(1-&gt;4)-(O-6-P-alpha-D-Man)]-Thr-[protein] + UDP-alpha-D-xylose = 3-O-[alpha-D-Xyl-(1-&gt;3)-beta-D-GlcA-(1-&gt;4)-beta-D-Xyl-(1-&gt;4)-Rib-ol-P-Rib-ol-P-3-beta-D-GalNAc-(1-&gt;3)-beta-D-GlcNAc-(1-&gt;4)-(O-6-P-alpha-D-Man)]-Thr-[protein] + UDP + H(+). The enzyme catalyses 3-O-{(1-&gt;[3)-alpha-D-Xyl-(1-&gt;3)-beta-D-GlcA-(1-&gt;](n)-4)-beta-D-Xyl-(1-&gt;4)-Rib-ol-P-Rib-ol-P-3-beta-D-GalNAc-(1-&gt;3)-beta-D-GlcNAc-(1-&gt;4)-O-6-P-alpha-D-Man}-L-Thr-[protein] + UDP-alpha-D-glucuronate = 3-O-{beta-D-GlcA-(1-&gt;[3)-alpha-D-Xyl-(1-&gt;3)-beta-D-GlcA-(1-&gt;](n)-4)-beta-D-Xyl-(1-&gt;4)-Rib-ol-P-Rib-ol-P-3-beta-D-GalNAc-(1-&gt;3)-beta-D-GlcNAc-(1-&gt;4)-O-6-P-alpha-D-Man}-L-Thr-[protein] + UDP + H(+). It catalyses the reaction 3-O-{beta-D-GlcA-(1-&gt;[3)-alpha-D-Xyl-(1-&gt;3)-beta-D-GlcA-(1-&gt;](n)-4)-beta-D-Xyl-(1-&gt;4)-Rib-ol-P-Rib-ol-P-3-beta-D-GalNAc-(1-&gt;3)-beta-D-GlcNAc-(1-&gt;4)-O-6-P-alpha-D-Man}-L-Thr-[protein] + UDP-alpha-D-xylose = 3-O-{(1-&gt;[3)-alpha-D-Xyl-(1-&gt;3)-beta-D-GlcA-(1-&gt;](n+1)-4)-beta-D-Xyl-(1-&gt;4)-Rib-ol-P-Rib-ol-P-3-beta-D-GalNAc-(1-&gt;3)-beta-D-GlcNAc-(1-&gt;4)-O-6-P-alpha-D-Man}-L-Thr-[protein] + UDP + H(+). The protein operates within protein modification; protein glycosylation. Its function is as follows. Bifunctional glycosyltransferase with both alpha-1,3-xylosyltransferase and beta-1,3-glucuronyltransferase activities involved in the maturation of alpha-dystroglycan (DAG1) by glycosylation leading to DAG1 binding to laminin G-like domain-containing extracellular proteins with high affinity and in a phosphorylated-O-mannosyl trisaccharide dependent manner. Elongates the glucuronyl-beta-1,4-xylose-beta disaccharide primer structure by adding repeating units [-3-Xylose-alpha-1,3-GlcA-beta-1-] to produce a heteropolysaccharide. Supports the maturation of DAG1 more effectively than LARGE1. In addition, can modify both heparan sulfate (HS)- and chondroitin/dermatan sulfate (CS/DS)-proteoglycans (PGs), namely GPC4, with a glycosaminoglycan (GAG)-like polysaccharide composed of xylose and glucuronic acid to confer laminin binding. This is Xylosyl- and glucuronyltransferase LARGE2 from Homo sapiens (Human).